Reading from the N-terminus, the 838-residue chain is Translation initiation factor IF-2 (838 aa).

The segment at 1–235 is disordered; sequence MSDTDGKKPL…RSLAAMKREQ (235 aa). The span at 18 to 27 shows a compositional bias: polar residues; sequence SGQVKQSFSH. Residues 50-60 show a composition bias toward low complexity; the sequence is SGSSTTTSSPS. Positions 88–156 are enriched in basic and acidic residues; that stretch reads KLREVDDAKR…AARRAEEAKR (69 aa). Low complexity predominate over residues 162-177; that stretch reads PAAAQPDAADSRASAP. The segment covering 187–208 has biased composition (basic and acidic residues); the sequence is SRKEREREADRDRTTKKDDSRR. The tr-type G domain maps to 335–509; sequence PRPPIITIMG…ELLDLRANPK (175 aa). Residues 344–351 are G1; that stretch reads GHVDHGKT. 344–351 lines the GTP pocket; it reads GHVDHGKT. A G2 region spans residues 369 to 373; that stretch reads GITQH. The G3 stretch occupies residues 391–394; that stretch reads DTPG. Residues 391–395 and 445–448 contribute to the GTP site; these read DTPGH and NKID. The segment at 445–448 is G4; that stretch reads NKID. The interval 481-483 is G5; that stretch reads SAK.

Belongs to the TRAFAC class translation factor GTPase superfamily. Classic translation factor GTPase family. IF-2 subfamily.

The protein resides in the cytoplasm. Its function is as follows. One of the essential components for the initiation of protein synthesis. Protects formylmethionyl-tRNA from spontaneous hydrolysis and promotes its binding to the 30S ribosomal subunits. Also involved in the hydrolysis of GTP during the formation of the 70S ribosomal complex. The protein is Translation initiation factor IF-2 of Cereibacter sphaeroides (strain ATCC 17025 / ATH 2.4.3) (Rhodobacter sphaeroides).